Reading from the N-terminus, the 230-residue chain is Orotidine 5'-phosphate decarboxylase (230 aa).

Residues D10, K31, 58-67 (DLKLHDIPNT), T117, R179, Q188, G208, and R209 each bind substrate. The Proton donor role is filled by K60.

This sequence belongs to the OMP decarboxylase family. Type 1 subfamily. Homodimer.

The catalysed reaction is orotidine 5'-phosphate + H(+) = UMP + CO2. Its pathway is pyrimidine metabolism; UMP biosynthesis via de novo pathway; UMP from orotate: step 2/2. Catalyzes the decarboxylation of orotidine 5'-monophosphate (OMP) to uridine 5'-monophosphate (UMP). The sequence is that of Orotidine 5'-phosphate decarboxylase from Staphylococcus haemolyticus (strain JCSC1435).